Reading from the N-terminus, the 290-residue chain is 33 kDa chaperonin (290 aa).

Cystine bridges form between Cys-235–Cys-237 and Cys-268–Cys-271.

This sequence belongs to the HSP33 family. In terms of processing, under oxidizing conditions two disulfide bonds are formed involving the reactive cysteines. Under reducing conditions zinc is bound to the reactive cysteines and the protein is inactive.

The protein localises to the cytoplasm. Redox regulated molecular chaperone. Protects both thermally unfolding and oxidatively damaged proteins from irreversible aggregation. Plays an important role in the bacterial defense system toward oxidative stress. The polypeptide is 33 kDa chaperonin (Streptococcus pneumoniae (strain P1031)).